The sequence spans 507 residues: Fumarate hydratase, mitochondrial (507 aa).

The N-terminal 41 residues, 1–41 (MNRAFCLLARSRRFPRVPSAGAVLSGEAATLPRCAPNVVRM), are a transit peptide targeting the mitochondrion. N6-acetyllysine; alternate is present on residues Lys-58, Lys-63, and Lys-77. N6-succinyllysine; alternate is present on residues Lys-58, Lys-63, and Lys-77. The residue at position 82 (Thr-82) is a Phosphothreonine. Lys-91 is modified (N6-acetyllysine). 2 positions are modified to N6-acetyllysine; alternate: Lys-112 and Lys-119. N6-succinyllysine; alternate occurs at positions 112 and 119. Substrate-binding positions include 142-144 (SGT), 173-176 (HPND), and 183-185 (SSN). An N6-acetyllysine modification is found at Lys-210. Lys-220 is subject to N6-acetyllysine; alternate. The residue at position 220 (Lys-220) is an N6-succinyllysine; alternate. Thr-231 lines the substrate pocket. Catalysis depends on His-232, which acts as the Proton donor/acceptor. The residue at position 233 (Thr-233) is a Phosphothreonine. N6-acetyllysine; alternate is present on Lys-289. N6-succinyllysine; alternate is present on Lys-289. Ser-362 is an active-site residue. Substrate-binding positions include Ser-363 and 368-370 (KVN). Position 363 is a phosphoserine (Ser-363). Lys-464 and Lys-470 each carry N6-succinyllysine. Position 499 is an N6-acetyllysine (Lys-499).

This sequence belongs to the class-II fumarase/aspartase family. Fumarase subfamily. Homotetramer. Interacts with H2AZ1. In terms of processing, phosphorylation at Thr-233 by PRKDC in response to DNA damage promotes translocation to the nucleus and recruitment to DNA double-strand breaks (DSBs).

It localises to the mitochondrion. The protein resides in the cytoplasm. It is found in the cytosol. The protein localises to the nucleus. Its subcellular location is the chromosome. It carries out the reaction (S)-malate = fumarate + H2O. The protein operates within carbohydrate metabolism; tricarboxylic acid cycle; (S)-malate from fumarate: step 1/1. Its function is as follows. Catalyzes the reversible stereospecific interconversion of fumarate to L-malate. Experiments in other species have demonstrated that specific isoforms of this protein act in defined pathways and favor one direction over the other. Functionally, catalyzes the hydration of fumarate to L-malate in the tricarboxylic acid (TCA) cycle to facilitate a transition step in the production of energy in the form of NADH. Catalyzes the dehydration of L-malate to fumarate. Fumarate metabolism in the cytosol plays a role during urea cycle and arginine metabolism; fumarate being a by-product of the urea cycle and amino-acid catabolism. Also plays a role in DNA repair by promoting non-homologous end-joining (NHEJ). In response to DNA damage and phosphorylation by PRKDC, translocates to the nucleus and accumulates at DNA double-strand breaks (DSBs): acts by catalyzing formation of fumarate, an inhibitor of KDM2B histone demethylase activity, resulting in enhanced dimethylation of histone H3 'Lys-36' (H3K36me2). The polypeptide is Fumarate hydratase, mitochondrial (Rattus norvegicus (Rat)).